A 317-amino-acid polypeptide reads, in one-letter code: Ferrochelatase (317 aa).

Fe cation-binding residues include H184 and E259.

Belongs to the ferrochelatase family.

It localises to the cytoplasm. It carries out the reaction heme b + 2 H(+) = protoporphyrin IX + Fe(2+). Its pathway is porphyrin-containing compound metabolism; protoheme biosynthesis; protoheme from protoporphyrin-IX: step 1/1. In terms of biological role, catalyzes the ferrous insertion into protoporphyrin IX. In Chlamydia muridarum (strain MoPn / Nigg), this protein is Ferrochelatase.